Consider the following 695-residue polypeptide: MKLHQFLVFLFLFLSCFALSSWALPLCSDSRAPSEVNSTLSFCPYKGKTCCNTMKDTSLMKQFQAMNISDKGCASVVKSILCANCDPFSSDLFRDNSDQQSVPILCNSTSSANSTENFCSETWETCQNVSISGSLFAASLQGRAGAPSNKNASKLADLWQSKTDFCSAFGGASSNETVCFSGEPVALNDNDTTPDKPPSGICLEKIGNGSYLNMVPHPDGSNRAFFSTQPGIVFLAGIPDQDSGGVLDVDPSSPFVDMTDEIHFDTEFGMMGMAFHPKFAQNGRFFASFNCDKSKWPGCTGRCSCNSDVNCDPSKLTPDSGSQPCQYQTVIAEYTANSTSSDPSKAKNAKPTEVRRIFTMGLPFTSHHAGQILFGPDGYLYFMMGDGGGGADPYNFAQNKKSLLGKIMRLDVDNIPSASEISKMGLWGNYSIPKDNPFREDKELEPEIWAVGLRNPWRCSFDSSRPSYFMCADVGQDTYEEVDLISKGGNYGWRVYEGPDLFHPESSPGGNTSVKSLNPIFPVMGYNHSEVDSSGKSASITGGYFYRSETDPCIAGRYVYADLYGNGVWAGIETPANSGSFVTKRTTFSCASDSPMKCSDSPGTSGLSLGYVFSFGEDNNKDIYLLTSNGVYRVVRPSRCNLTCSKENSTARRNPGTSSSPSSSSSSCYKHINGFHGSLVVLFVSLSLILLGLLN.

The signal sequence occupies residues Met1–Ala23. Asn37, Asn67, Asn107, Asn113, Asn128, Asn151, Asn175, Asn190, Asn208, Asn337, Asn429, Asn511, Asn527, Asn641, and Asn648 each carry an N-linked (GlcNAc...) asparagine glycan. Ser665 carries GPI-anchor amidated serine lipidation. The propeptide at Ser666–Asn695 is removed in mature form.

This sequence belongs to the PQQ oxidoreductase GdhB family. Requires pyrroloquinoline quinone as cofactor.

Its subcellular location is the cell membrane. This is HIPL1 protein (HIPL1) from Arabidopsis thaliana (Mouse-ear cress).